Reading from the N-terminus, the 129-residue chain is Large ribosomal subunit protein bL12 (129 aa).

It belongs to the bacterial ribosomal protein bL12 family. As to quaternary structure, homodimer. Part of the ribosomal stalk of the 50S ribosomal subunit. Forms a multimeric L10(L12)X complex, where L10 forms an elongated spine to which 2 to 4 L12 dimers bind in a sequential fashion. Binds GTP-bound translation factors.

Forms part of the ribosomal stalk which helps the ribosome interact with GTP-bound translation factors. Is thus essential for accurate translation. In Micrococcus luteus (strain ATCC 4698 / DSM 20030 / JCM 1464 / CCM 169 / CCUG 5858 / IAM 1056 / NBRC 3333 / NCIMB 9278 / NCTC 2665 / VKM Ac-2230) (Micrococcus lysodeikticus), this protein is Large ribosomal subunit protein bL12.